Here is a 543-residue protein sequence, read N- to C-terminus: MTRFIFVTGGVVSSLGKGIASASLAAVLEARGLKVTILKLDPYINVDPGTMSPFQHGEVFVTDDGAETDLDLGHYERFIRTRMTKRNNFTTGRVYETVLRKERRGDYLGGTVQVIPHITDEIKRRILAGGDGVDIALVEIGGTVGDIESQPFLEAVRQLKVELGNQRALLMHLTLVPYIATAGETKTKPTQHSVKELRSIGLQPDILLCRSEKEIDVDSRRKISLFTNVEERAVVPLPDAKSIYLIPRLLQSYNLDQIVLDKFGLEAAETDLAEWDEVVRREQNPEHAVTIAMVGKYMDLLDAYKSLNEALLHAGLHTLTKVKINYINAEDVETQGVSILEDADAILVPGGFGERGLEGKLMAVRYARENKVPYLGICLGMQTAVIEFARNVLKLDGANSTEFDRKSPFPVIGLITEWINEEGKVETRDESSDLGGTMRLGAQECHLEENSRIREIYGKANIIERHRHRFEVNNRFLDQLRQGGLRIGGWSSDDTLVEVVEVPDHPWFVACQFHPEFTSTPRDGHPLFTSYIQAAVEQNERAK.

Positions 1 to 265 (MTRFIFVTGG…DQIVLDKFGL (265 aa)) are amidoligase domain. S13 contributes to the CTP binding site. Residue S13 coordinates UTP. ATP is bound by residues 14-19 (SLGKGI) and D71. Mg(2+) contacts are provided by D71 and E139. CTP contacts are provided by residues 146 to 148 (DIE), 186 to 191 (KTKPTQ), and K222. Residues 186 to 191 (KTKPTQ) and K222 each bind UTP. One can recognise a Glutamine amidotransferase type-1 domain in the interval 290 to 541 (TIAMVGKYMD…IQAAVEQNER (252 aa)). G351 contacts L-glutamine. The active-site Nucleophile; for glutamine hydrolysis is C378. L-glutamine-binding positions include 379 to 382 (LGMQ), E402, and R469. Residues H514 and E516 contribute to the active site.

Belongs to the CTP synthase family. In terms of assembly, homotetramer.

The enzyme catalyses UTP + L-glutamine + ATP + H2O = CTP + L-glutamate + ADP + phosphate + 2 H(+). It catalyses the reaction L-glutamine + H2O = L-glutamate + NH4(+). It carries out the reaction UTP + NH4(+) + ATP = CTP + ADP + phosphate + 2 H(+). The protein operates within pyrimidine metabolism; CTP biosynthesis via de novo pathway; CTP from UDP: step 2/2. Allosterically activated by GTP, when glutamine is the substrate; GTP has no effect on the reaction when ammonia is the substrate. The allosteric effector GTP functions by stabilizing the protein conformation that binds the tetrahedral intermediate(s) formed during glutamine hydrolysis. Inhibited by the product CTP, via allosteric rather than competitive inhibition. Its function is as follows. Catalyzes the ATP-dependent amination of UTP to CTP with either L-glutamine or ammonia as the source of nitrogen. Regulates intracellular CTP levels through interactions with the four ribonucleotide triphosphates. In Saccharophagus degradans (strain 2-40 / ATCC 43961 / DSM 17024), this protein is CTP synthase.